We begin with the raw amino-acid sequence, 218 residues long: 3-dehydroquinate dehydratase (218 aa).

Residues 29 to 31 (EFR) and Arg56 each bind 3-dehydroquinate. His116 serves as the catalytic Proton donor/acceptor. Lys142 (schiff-base intermediate with substrate) is an active-site residue. Positions 180, 200, and 204 each coordinate 3-dehydroquinate.

It belongs to the type-I 3-dehydroquinase family. Homodimer.

It catalyses the reaction 3-dehydroquinate = 3-dehydroshikimate + H2O. It participates in metabolic intermediate biosynthesis; chorismate biosynthesis; chorismate from D-erythrose 4-phosphate and phosphoenolpyruvate: step 3/7. In terms of biological role, involved in the third step of the chorismate pathway, which leads to the biosynthesis of aromatic amino acids. Catalyzes the cis-dehydration of 3-dehydroquinate (DHQ) and introduces the first double bond of the aromatic ring to yield 3-dehydroshikimate. The polypeptide is 3-dehydroquinate dehydratase (Methanococcus vannielii (strain ATCC 35089 / DSM 1224 / JCM 13029 / OCM 148 / SB)).